Here is a 172-residue protein sequence, read N- to C-terminus: Conglutin-7 (172 aa).

The signal sequence occupies residues 1–21 (MAKLTILVALALFLLAAHASA). Intrachain disulfides connect Cys33–Cys116, Cys45–Cys103, Cys104–Cys152, and Cys118–Cys160. The tract at residues 54–98 (QRDEDSYGRDPYSPSQDPYSPSQDPDRRDPYSPSPYDRRGAGSSQ) is disordered. A compositionally biased stretch (low complexity) spans 62-76 (RDPYSPSQDPYSPSQ). 4-hydroxyproline occurs at positions 67, 74, and 86. A compositionally biased stretch (basic and acidic residues) spans 77-98 (DPDRRDPYSPSPYDRRGAGSSQ).

It belongs to the 2S seed storage albumins family. Post-translationally, the hydroxyproline modifications determined by mass spectrometry are probably 4-hydroxyproline as determined for other extracellular plant proteins. Expressed in seeds, not expressed in leaves, roots and pegs.

Its function is as follows. Weak inhibitor of trypsin. The chain is Conglutin-7 from Arachis hypogaea (Peanut).